Consider the following 95-residue polypeptide: Aspartyl/glutamyl-tRNA(Asn/Gln) amidotransferase subunit C (95 aa).

The protein belongs to the GatC family. As to quaternary structure, heterotrimer of A, B and C subunits.

The catalysed reaction is L-glutamyl-tRNA(Gln) + L-glutamine + ATP + H2O = L-glutaminyl-tRNA(Gln) + L-glutamate + ADP + phosphate + H(+). The enzyme catalyses L-aspartyl-tRNA(Asn) + L-glutamine + ATP + H2O = L-asparaginyl-tRNA(Asn) + L-glutamate + ADP + phosphate + 2 H(+). Functionally, allows the formation of correctly charged Asn-tRNA(Asn) or Gln-tRNA(Gln) through the transamidation of misacylated Asp-tRNA(Asn) or Glu-tRNA(Gln) in organisms which lack either or both of asparaginyl-tRNA or glutaminyl-tRNA synthetases. The reaction takes place in the presence of glutamine and ATP through an activated phospho-Asp-tRNA(Asn) or phospho-Glu-tRNA(Gln). This is Aspartyl/glutamyl-tRNA(Asn/Gln) amidotransferase subunit C from Prochlorococcus marinus (strain NATL1A).